A 62-amino-acid polypeptide reads, in one-letter code: Conotoxin Qc5.1 (62 aa).

The N-terminal stretch at 1 to 22 is a signal peptide; that stretch reads MRCVPVFIILLLLSPSAPSVDA. The propeptide occupies 23 to 48; that stretch reads HPMTKDDVPQASFHDDAKRTLQVPWM. Valine amide is present on V60.

It belongs to the conotoxin T superfamily. In terms of processing, contains 2 disulfide bonds that can be either 'C1-C3, C2-C4' or 'C1-C4, C2-C3', since these disulfide connectivities have been observed for conotoxins with cysteine framework V (for examples, see AC P0DQQ7 and AC P81755). Expressed by the venom duct.

It is found in the secreted. This chain is Conotoxin Qc5.1, found in Conus quercinus (Oak cone).